The primary structure comprises 308 residues: Cytochrome b (308 aa).

Helical transmembrane passes span 1–21 (FGLLLGICLIVQIVTGLLLAA), 45–66 (WLIRNLHANGASFFFICIYLHI), 81–101 (WNIGVILLLTLMATAFVGYVL), and 146–166 (FFALHFLLPFVIAGLTLVHLT). Heme b is bound by residues histidine 51 and histidine 65. Histidine 150 and histidine 164 together coordinate heme b. Histidine 169 is a binding site for a ubiquinone. The next 3 helical transmembrane spans lie at 194-214 (TKDMLGFALMLIPLITLALFS), 256-276 (LGGVLALAASVLVLFLIPLLH), and 288-308 (LSQILFWTLVANLLVLTWVGS).

This sequence belongs to the cytochrome b family. In terms of assembly, the cytochrome bc1 complex contains 11 subunits: 3 respiratory subunits (MT-CYB, CYC1 and UQCRFS1), 2 core proteins (UQCRC1 and UQCRC2) and 6 low-molecular weight proteins (UQCRH/QCR6, UQCRB/QCR7, UQCRQ/QCR8, UQCR10/QCR9, UQCR11/QCR10 and a cleavage product of UQCRFS1). This cytochrome bc1 complex then forms a dimer. Heme b serves as cofactor.

It localises to the mitochondrion inner membrane. In terms of biological role, component of the ubiquinol-cytochrome c reductase complex (complex III or cytochrome b-c1 complex) that is part of the mitochondrial respiratory chain. The b-c1 complex mediates electron transfer from ubiquinol to cytochrome c. Contributes to the generation of a proton gradient across the mitochondrial membrane that is then used for ATP synthesis. This Pomatostomus temporalis (Grey-crowned babbler) protein is Cytochrome b (MT-CYB).